Consider the following 235-residue polypeptide: Adenosine 5'-phosphosulfate reductase (235 aa).

Cys-121, Cys-122, Cys-204, and Cys-207 together coordinate [4Fe-4S] cluster. Cys-230 serves as the catalytic Nucleophile; cysteine thiosulfonate intermediate.

This sequence belongs to the PAPS reductase family. CysH subfamily. It depends on [4Fe-4S] cluster as a cofactor.

It is found in the cytoplasm. The enzyme catalyses [thioredoxin]-disulfide + sulfite + AMP + 2 H(+) = adenosine 5'-phosphosulfate + [thioredoxin]-dithiol. It functions in the pathway sulfur metabolism; hydrogen sulfide biosynthesis; sulfite from sulfate. Functionally, catalyzes the formation of sulfite from adenosine 5'-phosphosulfate (APS) using thioredoxin as an electron donor. In Anoxybacillus flavithermus (strain DSM 21510 / WK1), this protein is Adenosine 5'-phosphosulfate reductase.